Reading from the N-terminus, the 378-residue chain is Chaperone protein DnaJ (378 aa).

Positions aspartate 4 to glycine 68 constitute a J domain. The segment at glycine 136–threonine 218 adopts a CR-type zinc-finger fold. Zn(2+)-binding residues include cysteine 149, cysteine 152, cysteine 166, cysteine 169, cysteine 192, cysteine 195, cysteine 206, and cysteine 209. CXXCXGXG motif repeat units lie at residues cysteine 149–glycine 156, cysteine 166–glycine 173, cysteine 192–glycine 199, and cysteine 206–glycine 213.

This sequence belongs to the DnaJ family. Homodimer. It depends on Zn(2+) as a cofactor.

The protein resides in the cytoplasm. Functionally, participates actively in the response to hyperosmotic and heat shock by preventing the aggregation of stress-denatured proteins and by disaggregating proteins, also in an autonomous, DnaK-independent fashion. Unfolded proteins bind initially to DnaJ; upon interaction with the DnaJ-bound protein, DnaK hydrolyzes its bound ATP, resulting in the formation of a stable complex. GrpE releases ADP from DnaK; ATP binding to DnaK triggers the release of the substrate protein, thus completing the reaction cycle. Several rounds of ATP-dependent interactions between DnaJ, DnaK and GrpE are required for fully efficient folding. Also involved, together with DnaK and GrpE, in the DNA replication of plasmids through activation of initiation proteins. This Picosynechococcus sp. (strain ATCC 27264 / PCC 7002 / PR-6) (Agmenellum quadruplicatum) protein is Chaperone protein DnaJ.